The following is a 734-amino-acid chain: Photosystem I P700 chlorophyll a apoprotein A2 (734 aa).

The next 8 helical transmembrane spans lie at I46–A69, L135–Q158, L175–I199, M273–Y291, I330–Y353, A369–I395, A417–H439, and F517–V535. Residues C559 and C568 each contribute to the [4Fe-4S] cluster site. The next 2 membrane-spanning stretches (helical) occupy residues A575–W596 and L643–I665. The chlorophyll a site is built by H654, M662, and Y670. W671 provides a ligand contact to phylloquinone. The chain crosses the membrane as a helical span at residues L707–A727.

It belongs to the PsaA/PsaB family. In terms of assembly, the PsaA/B heterodimer binds the P700 chlorophyll special pair and subsequent electron acceptors. PSI consists of a core antenna complex that captures photons, and an electron transfer chain that converts photonic excitation into a charge separation. The eukaryotic PSI reaction center is composed of at least 11 subunits. Requires P700 is a chlorophyll a/chlorophyll a' dimer, A0 is one or more chlorophyll a, A1 is one or both phylloquinones and FX is a shared 4Fe-4S iron-sulfur center. as cofactor.

It is found in the plastid. The protein resides in the chloroplast thylakoid membrane. The catalysed reaction is reduced [plastocyanin] + hnu + oxidized [2Fe-2S]-[ferredoxin] = oxidized [plastocyanin] + reduced [2Fe-2S]-[ferredoxin]. Its function is as follows. PsaA and PsaB bind P700, the primary electron donor of photosystem I (PSI), as well as the electron acceptors A0, A1 and FX. PSI is a plastocyanin-ferredoxin oxidoreductase, converting photonic excitation into a charge separation, which transfers an electron from the donor P700 chlorophyll pair to the spectroscopically characterized acceptors A0, A1, FX, FA and FB in turn. Oxidized P700 is reduced on the lumenal side of the thylakoid membrane by plastocyanin. This chain is Photosystem I P700 chlorophyll a apoprotein A2, found in Nandina domestica (Heavenly bamboo).